Reading from the N-terminus, the 217-residue chain is Somatotropin (217 aa).

The first 26 residues, 1–26 (MMAAGPRTSLLLAFALLCLPWTQVVG), serve as a signal peptide directing secretion. His46 contacts Zn(2+). A disulfide bridge links Cys79 with Cys190. A Phosphoserine modification is found at Ser132. Glu199 is a Zn(2+) binding site. A disulfide bridge links Cys207 with Cys215.

The protein belongs to the somatotropin/prolactin family.

The protein resides in the secreted. Its function is as follows. Plays an important role in growth control. Its major role in stimulating body growth is to stimulate the liver and other tissues to secrete IGF1. It stimulates both the differentiation and proliferation of myoblasts. It also stimulates amino acid uptake and protein synthesis in muscle and other tissues. This Bos taurus (Bovine) protein is Somatotropin (GH1).